A 1138-amino-acid polypeptide reads, in one-letter code: Lysylphosphatidylglycerol biosynthesis bifunctional protein LysX (1138 aa).

Over residues 1 to 15 the composition is skewed to polar residues; it reads MALDTPSSDLPVSTD. The disordered stretch occupies residues 1–34; the sequence is MALDTPSSDLPVSTDDTAEHQPTPAHRPPSAADR. The tract at residues 1-646 is phosphatidylglycerol lysyltransferase; that stretch reads MALDTPSSDL…LIAQLESEED (646 aa). A run of 6 helical transmembrane segments spans residues 56–76, 92–112, 119–139, 155–175, 190–210, and 247–267; these read IAGT…IFPL, IVSL…VAIA, IAWW…ALLL, IQIW…IVTY, ALGV…GLVW, and IVID…AATV. The interval 647 to 1138 is lysine--tRNA ligase; that stretch reads RTAVEVHRPE…AFPMVKPTDA (492 aa). A DNA-binding region (OB) is located at residues 698–772; sequence VTIAGRVTKM…GELSVLIDAW (75 aa). Mg(2+) is bound by residues Asp1048 and Glu1055.

The protein in the N-terminal section; belongs to the LPG synthetase family. It in the C-terminal section; belongs to the class-II aminoacyl-tRNA synthetase family. It depends on Mg(2+) as a cofactor.

The protein localises to the cell membrane. The catalysed reaction is tRNA(Lys) + L-lysine + ATP = L-lysyl-tRNA(Lys) + AMP + diphosphate. The enzyme catalyses L-lysyl-tRNA(Lys) + a 1,2-diacyl-sn-glycero-3-phospho-(1'-sn-glycerol) = a 1,2-diacyl-sn-glycero-3-phospho-1'-(3'-O-L-lysyl)-sn-glycerol + tRNA(Lys). In terms of biological role, catalyzes the production of L-lysyl-tRNA(Lys)transfer and the transfer of a lysyl group from L-lysyl-tRNA(Lys) to membrane-bound phosphatidylglycerol (PG), which produces lysylphosphatidylglycerol (LPG), one of the components of the bacterial membrane with a positive net charge. LPG synthesis contributes to the resistance to cationic antimicrobial peptides (CAMPs) and likely protects M.tuberculosis against the CAMPs produced by competiting microorganisms (bacteriocins). In fact, the modification of anionic phosphatidylglycerol with positively charged L-lysine results in repulsion of the peptides. This chain is Lysylphosphatidylglycerol biosynthesis bifunctional protein LysX (lysX), found in Gordonia bronchialis (strain ATCC 25592 / DSM 43247 / BCRC 13721 / JCM 3198 / KCTC 3076 / NBRC 16047 / NCTC 10667) (Rhodococcus bronchialis).